Reading from the N-terminus, the 142-residue chain is Transcriptional regulator MraZ (142 aa).

SpoVT-AbrB domains lie at 5–51 (ASAL…PRPE) and 77–120 (AMDV…DSQT).

This sequence belongs to the MraZ family. As to quaternary structure, forms oligomers.

The protein localises to the cytoplasm. It is found in the nucleoid. The protein is Transcriptional regulator MraZ of Burkholderia ambifaria (strain MC40-6).